Reading from the N-terminus, the 527-residue chain is Probable bifunctional methylthioribulose-1-phosphate dehydratase/enolase-phosphatase E1 (527 aa).

Positions 1–244 (MAAAAAPAVA…AIKLHQLGLD (244 aa)) are methylthioribulose-1-phosphate dehydratase. Cys116 contacts substrate. His134 and His136 together coordinate Zn(2+). The Proton donor/acceptor; for methylthioribulose-1-phosphate dehydratase activity role is filled by Glu159. Zn(2+) is bound at residue His209. The enolase-phosphatase E1 stretch occupies residues 288–527 (IVLDIEGTTT…FKTINSLSEI (240 aa)). Mg(2+) is bound by residues Asp291 and Glu293. Substrate contacts are provided by residues 426-427 (SS) and Lys460. A Mg(2+)-binding site is contributed by Asp486.

In the N-terminal section; belongs to the aldolase class II family. MtnB subfamily. This sequence in the C-terminal section; belongs to the HAD-like hydrolase superfamily. MasA/MtnC family. It depends on Zn(2+) as a cofactor. Mg(2+) serves as cofactor.

The catalysed reaction is 5-(methylsulfanyl)-D-ribulose 1-phosphate = 5-methylsulfanyl-2,3-dioxopentyl phosphate + H2O. It carries out the reaction 5-methylsulfanyl-2,3-dioxopentyl phosphate + H2O = 1,2-dihydroxy-5-(methylsulfanyl)pent-1-en-3-one + phosphate. Its pathway is amino-acid biosynthesis; L-methionine biosynthesis via salvage pathway; L-methionine from S-methyl-5-thio-alpha-D-ribose 1-phosphate: step 2/6. It functions in the pathway amino-acid biosynthesis; L-methionine biosynthesis via salvage pathway; L-methionine from S-methyl-5-thio-alpha-D-ribose 1-phosphate: step 3/6. The protein operates within amino-acid biosynthesis; L-methionine biosynthesis via salvage pathway; L-methionine from S-methyl-5-thio-alpha-D-ribose 1-phosphate: step 4/6. This is Probable bifunctional methylthioribulose-1-phosphate dehydratase/enolase-phosphatase E1 from Ricinus communis (Castor bean).